A 486-amino-acid polypeptide reads, in one-letter code: FAD-dependent oxidoreductase domain-containing protein 1 (486 aa).

The helical transmembrane segment at 62–82 (EHSDVVIVGGGVLGLSVAYWL) threads the bilayer.

As to quaternary structure, associates with components of the mitochondrial respiratory chain complex I. It depends on FAD as a cofactor.

It localises to the mitochondrion inner membrane. In terms of biological role, required for the assembly of the mitochondrial membrane respiratory chain NADH dehydrogenase (Complex I). Involved in mid-late stages of complex I assembly. The sequence is that of FAD-dependent oxidoreductase domain-containing protein 1 from Homo sapiens (Human).